The chain runs to 397 residues: uncharacterized protein (397 aa).

Residues Cys47, Cys53, Cys56, and Cys131 each contribute to the [4Fe-4S] cluster site. S-adenosyl-L-methionine contacts are provided by Gln235, Phe262, Glu282, and Asp328. The Nucleophile role is filled by Cys354.

Belongs to the class I-like SAM-binding methyltransferase superfamily. RNA M5U methyltransferase family.

This is an uncharacterized protein from Zymomonas mobilis subsp. mobilis (strain ATCC 31821 / ZM4 / CP4).